A 283-amino-acid chain; its full sequence is Polyamine aminopropyltransferase (283 aa).

One can recognise a PABS domain in the interval threonine 5–lysine 238. Glutamine 32 serves as a coordination point for S-methyl-5'-thioadenosine. Histidine 63 and aspartate 87 together coordinate spermidine. S-methyl-5'-thioadenosine is bound by residues glutamate 107 and aspartate 139 to glycine 140. The Proton acceptor role is filled by aspartate 158. Residue aspartate 158 to aspartate 161 participates in spermidine binding.

It belongs to the spermidine/spermine synthase family. In terms of assembly, homodimer or homotetramer.

It localises to the cytoplasm. The enzyme catalyses S-adenosyl 3-(methylsulfanyl)propylamine + putrescine = S-methyl-5'-thioadenosine + spermidine + H(+). The protein operates within amine and polyamine biosynthesis; spermidine biosynthesis; spermidine from putrescine: step 1/1. Functionally, catalyzes the irreversible transfer of a propylamine group from the amino donor S-adenosylmethioninamine (decarboxy-AdoMet) to putrescine (1,4-diaminobutane) to yield spermidine. The sequence is that of Polyamine aminopropyltransferase from Prochlorococcus marinus (strain MIT 9515).